The primary structure comprises 415 residues: Serine hydroxymethyltransferase (415 aa).

(6S)-5,6,7,8-tetrahydrofolate-binding positions include leucine 117 and 121–123; that span reads GHL. Lysine 226 is modified (N6-(pyridoxal phosphate)lysine). Position 241 (glutamate 241) interacts with (6S)-5,6,7,8-tetrahydrofolate.

It belongs to the SHMT family. Homodimer. Requires pyridoxal 5'-phosphate as cofactor.

It is found in the cytoplasm. It carries out the reaction (6R)-5,10-methylene-5,6,7,8-tetrahydrofolate + glycine + H2O = (6S)-5,6,7,8-tetrahydrofolate + L-serine. It participates in one-carbon metabolism; tetrahydrofolate interconversion. It functions in the pathway amino-acid biosynthesis; glycine biosynthesis; glycine from L-serine: step 1/1. Its function is as follows. Catalyzes the reversible interconversion of serine and glycine with tetrahydrofolate (THF) serving as the one-carbon carrier. This reaction serves as the major source of one-carbon groups required for the biosynthesis of purines, thymidylate, methionine, and other important biomolecules. Also exhibits THF-independent aldolase activity toward beta-hydroxyamino acids, producing glycine and aldehydes, via a retro-aldol mechanism. The sequence is that of Serine hydroxymethyltransferase from Bacillus pumilus (strain SAFR-032).